The following is a 238-amino-acid chain: Large ribosomal subunit protein uL1 (238 aa).

This sequence belongs to the universal ribosomal protein uL1 family. Part of the 50S ribosomal subunit.

In terms of biological role, binds directly to 23S rRNA. The L1 stalk is quite mobile in the ribosome, and is involved in E site tRNA release. Functionally, protein L1 is also a translational repressor protein, it controls the translation of the L11 operon by binding to its mRNA. This Frankia alni (strain DSM 45986 / CECT 9034 / ACN14a) protein is Large ribosomal subunit protein uL1.